We begin with the raw amino-acid sequence, 239 residues long: Probable septum site-determining protein MinC (239 aa).

This sequence belongs to the MinC family. Interacts with MinD and FtsZ.

Cell division inhibitor that blocks the formation of polar Z ring septums. Rapidly oscillates between the poles of the cell to destabilize FtsZ filaments that have formed before they mature into polar Z rings. Prevents FtsZ polymerization. In Colwellia psychrerythraea (strain 34H / ATCC BAA-681) (Vibrio psychroerythus), this protein is Probable septum site-determining protein MinC.